The primary structure comprises 131 residues: Small ribosomal subunit protein uS11 (131 aa).

This sequence belongs to the universal ribosomal protein uS11 family. Part of the 30S ribosomal subunit. Interacts with proteins S7 and S18. Binds to IF-3.

Its function is as follows. Located on the platform of the 30S subunit, it bridges several disparate RNA helices of the 16S rRNA. Forms part of the Shine-Dalgarno cleft in the 70S ribosome. The sequence is that of Small ribosomal subunit protein uS11 from Pelobacter propionicus (strain DSM 2379 / NBRC 103807 / OttBd1).